The chain runs to 142 residues: Putative pre-16S rRNA nuclease (142 aa).

It belongs to the YqgF nuclease family.

The protein localises to the cytoplasm. Its function is as follows. Could be a nuclease involved in processing of the 5'-end of pre-16S rRNA. The polypeptide is Putative pre-16S rRNA nuclease (Lactobacillus helveticus (strain DPC 4571)).